We begin with the raw amino-acid sequence, 45 residues long: Large ribosomal subunit protein bL34 (45 aa).

The protein belongs to the bacterial ribosomal protein bL34 family.

This chain is Large ribosomal subunit protein bL34, found in Salinispora arenicola (strain CNS-205).